The following is a 148-amino-acid chain: UPF0178 protein DP1304 (148 aa).

The protein belongs to the UPF0178 family.

The polypeptide is UPF0178 protein DP1304 (Desulfotalea psychrophila (strain LSv54 / DSM 12343)).